A 122-amino-acid polypeptide reads, in one-letter code: Piercer of microtubule wall 2 protein (122 aa).

Basic and acidic residues predominate over residues 1-23 (MARETDCDLDKKTSLTSDAEMRP). 2 disordered regions span residues 1-26 (MARETDCDLDKKTSLTSDAEMRPEPP) and 99-122 (QNNSLNVGPDRTRTIDSPNYQHTL). Residues 113–122 (IDSPNYQHTL) show a composition bias toward polar residues.

The protein belongs to the PIERCE2 family. As to quaternary structure, microtubule inner protein component of sperm flagellar doublet microtubules. Interacts with CFAP53, ODAD1 and ODAD3; the interactions link the outer dynein arms docking complex (ODA-DC) to the internal microtubule inner proteins (MIP) in cilium axoneme.

It localises to the cytoplasm. Its subcellular location is the cytoskeleton. It is found in the cilium axoneme. The protein resides in the flagellum axoneme. Microtubule inner protein involved in the attachment of outer dynein arms (ODAs) to dynein-decorated doublet microtubules (DMTs) in cilia axoneme, which is required for motile cilia beating. This is Piercer of microtubule wall 2 protein from Mus musculus (Mouse).